Consider the following 599-residue polypeptide: DNA primase (599 aa).

The segment at 38 to 62 (CPFHDEKTPSFTVSEDKQICHCFGC) adopts a CHC2-type zinc-finger fold. The Toprim domain maps to 260–341 (DEIVLLEGFM…NVFVIQLPSG (82 aa)). Mg(2+)-binding residues include Glu-266, Asp-310, and Asp-312.

It belongs to the DnaG primase family. Monomer. Interacts with DnaB. Zn(2+) serves as cofactor. It depends on Mg(2+) as a cofactor.

The enzyme catalyses ssDNA + n NTP = ssDNA/pppN(pN)n-1 hybrid + (n-1) diphosphate.. Functionally, RNA polymerase that catalyzes the synthesis of short RNA molecules used as primers for DNA polymerase during DNA replication. The chain is DNA primase from Staphylococcus aureus (strain COL).